The sequence spans 250 residues: Ubiquinone/menaquinone biosynthesis C-methyltransferase UbiE (250 aa).

Residues Thr-73, Asp-94, 122-123 (NA), and Ser-139 each bind S-adenosyl-L-methionine.

The protein belongs to the class I-like SAM-binding methyltransferase superfamily. MenG/UbiE family.

The catalysed reaction is a 2-demethylmenaquinol + S-adenosyl-L-methionine = a menaquinol + S-adenosyl-L-homocysteine + H(+). It carries out the reaction a 2-methoxy-6-(all-trans-polyprenyl)benzene-1,4-diol + S-adenosyl-L-methionine = a 5-methoxy-2-methyl-3-(all-trans-polyprenyl)benzene-1,4-diol + S-adenosyl-L-homocysteine + H(+). The protein operates within quinol/quinone metabolism; menaquinone biosynthesis; menaquinol from 1,4-dihydroxy-2-naphthoate: step 2/2. It participates in cofactor biosynthesis; ubiquinone biosynthesis. Functionally, methyltransferase required for the conversion of demethylmenaquinol (DMKH2) to menaquinol (MKH2) and the conversion of 2-polyprenyl-6-methoxy-1,4-benzoquinol (DDMQH2) to 2-polyprenyl-3-methyl-6-methoxy-1,4-benzoquinol (DMQH2). The sequence is that of Ubiquinone/menaquinone biosynthesis C-methyltransferase UbiE from Francisella philomiragia subsp. philomiragia (strain ATCC 25017 / CCUG 19701 / FSC 153 / O#319-036).